The following is a 154-amino-acid chain: Lipoprotein signal peptidase (154 aa).

2 consecutive transmembrane segments (helical) span residues 57–77 (LVLSAVTLLVLSAIIVYMIKY) and 86–103 (ISLSLVISGALGNLYDRV). Residues D110 and D129 contribute to the active site. The chain crosses the membrane as a helical span at residues 124–144 (VFNVADICVVVGTIMIAIFIV).

This sequence belongs to the peptidase A8 family.

It localises to the cell membrane. It catalyses the reaction Release of signal peptides from bacterial membrane prolipoproteins. Hydrolyzes -Xaa-Yaa-Zaa-|-(S,diacylglyceryl)Cys-, in which Xaa is hydrophobic (preferably Leu), and Yaa (Ala or Ser) and Zaa (Gly or Ala) have small, neutral side chains.. Its pathway is protein modification; lipoprotein biosynthesis (signal peptide cleavage). This protein specifically catalyzes the removal of signal peptides from prolipoproteins. This Clostridium acetobutylicum (strain ATCC 824 / DSM 792 / JCM 1419 / IAM 19013 / LMG 5710 / NBRC 13948 / NRRL B-527 / VKM B-1787 / 2291 / W) protein is Lipoprotein signal peptidase.